The primary structure comprises 243 residues: Benzil reductase ((S)-benzoin forming) (243 aa).

Residues Ile6, Asn80, Tyr147, Lys151, and Thr184 each coordinate NADP(+). Tyr147 serves as the catalytic Proton acceptor.

It belongs to the short-chain dehydrogenases/reductases (SDR) family.

It localises to the cytoplasm. The catalysed reaction is (S)-benzoin + NADP(+) = benzil + NADPH + H(+). Its function is as follows. Reduces benzil stereospecifically to (S)-benzoin. This chain is Benzil reductase ((S)-benzoin forming) (yueD), found in Bacillus subtilis (strain 168).